The chain runs to 339 residues: Serine/threonine-protein kinase pdik1l-A (339 aa).

Residues 8 to 332 enclose the Protein kinase domain; that stretch reads YDLIREVGRG…LELKLIQIAF (325 aa). Residues 14–22 and lysine 37 each bind ATP; that span reads VGRGSYGVV. Aspartate 164 functions as the Proton acceptor in the catalytic mechanism.

Belongs to the protein kinase superfamily. Ser/Thr protein kinase family.

It localises to the nucleus. The catalysed reaction is L-seryl-[protein] + ATP = O-phospho-L-seryl-[protein] + ADP + H(+). It carries out the reaction L-threonyl-[protein] + ATP = O-phospho-L-threonyl-[protein] + ADP + H(+). The polypeptide is Serine/threonine-protein kinase pdik1l-A (pdik1-a) (Xenopus laevis (African clawed frog)).